The following is a 619-amino-acid chain: Eukaryotic translation initiation factor 3 subunit D (619 aa).

The disordered stretch occupies residues 99 to 160 (QKQPHQRGRF…KWGARPPPKI (62 aa)). Residues 100-121 (KQPHQRGRFRGNLRNQRGRGRG) show a composition bias toward basic residues. The tract at residues 288-302 (EFDLLTVNETAIEPP) is RNA gate. The segment at 588–619 (TPAATETVATATTEATTPTTATKTTAPAAAQK) is disordered.

Belongs to the eIF-3 subunit D family. Component of the eukaryotic translation initiation factor 3 (eIF-3) complex.

Its subcellular location is the cytoplasm. MRNA cap-binding component of the eukaryotic translation initiation factor 3 (eIF-3) complex, which is involved in protein synthesis of a specialized repertoire of mRNAs and, together with other initiation factors, stimulates binding of mRNA and methionyl-tRNAi to the 40S ribosome. The eIF-3 complex specifically targets and initiates translation of a subset of mRNAs involved in cell proliferation. In the eIF-3 complex, eif3d specifically recognizes and binds the 7-methylguanosine cap of a subset of mRNAs. This Aedes aegypti (Yellowfever mosquito) protein is Eukaryotic translation initiation factor 3 subunit D.